A 303-amino-acid chain; its full sequence is Coenzyme PQQ synthesis protein B (303 aa).

The protein belongs to the PqqB family.

The protein operates within cofactor biosynthesis; pyrroloquinoline quinone biosynthesis. May be involved in the transport of PQQ or its precursor to the periplasm. In Rhizobium meliloti (strain 1021) (Ensifer meliloti), this protein is Coenzyme PQQ synthesis protein B.